Reading from the N-terminus, the 117-residue chain is Fluoride-specific ion channel FluC 2 (117 aa).

The next 2 membrane-spanning stretches (helical) occupy residues 1 to 21 and 46 to 66; these read MISI…RSAI and FLIG…AFFV. Na(+) contacts are provided by glycine 71 and threonine 74. A helical membrane pass occupies residues 95–115; the sequence is LFLNYSLLQFIIGFIACYIGY.

It belongs to the fluoride channel Fluc/FEX (TC 1.A.43) family.

The protein localises to the cell membrane. The catalysed reaction is fluoride(in) = fluoride(out). Na(+) is not transported, but it plays an essential structural role and its presence is essential for fluoride channel function. In terms of biological role, fluoride-specific ion channel. Important for reducing fluoride concentration in the cell, thus reducing its toxicity. The protein is Fluoride-specific ion channel FluC 2 of Staphylococcus aureus (strain Mu50 / ATCC 700699).